A 70-amino-acid polypeptide reads, in one-letter code: U-actitoxin-Avd11a (70 aa).

Residues 36-70 form the ShKT domain; sequence CNDYKSSSYCRSVGSRNECGIHKYRMYCRKTCGSC. 3 cysteine pairs are disulfide-bonded: C36-C70, C45-C63, and C54-C67. The interval 58 to 59 is crucial for binding to potassium channels; sequence KY.

Belongs to the sea anemone type 1 potassium channel toxin family. Type 1b subfamily.

The protein localises to the secreted. The protein resides in the nematocyst. In terms of biological role, inhibits voltage-gated potassium channels (Kv1/KCNA). The sequence is that of U-actitoxin-Avd11a from Anemonia viridis (Snakelocks anemone).